A 333-amino-acid polypeptide reads, in one-letter code: Malate dehydrogenase (333 aa).

Residues 10–15 and D34 each bind NAD(+); that span reads GGGQIG. Residues R83 and R89 each contribute to the substrate site. Residues N96 and 119–121 each bind NAD(+); that span reads ITN. Residues N121 and R152 each contribute to the substrate site. H176 functions as the Proton acceptor in the catalytic mechanism.

Belongs to the LDH/MDH superfamily. MDH type 3 family.

The catalysed reaction is (S)-malate + NAD(+) = oxaloacetate + NADH + H(+). In terms of biological role, catalyzes the reversible oxidation of malate to oxaloacetate. The protein is Malate dehydrogenase of Parvibaculum lavamentivorans (strain DS-1 / DSM 13023 / NCIMB 13966).